A 112-amino-acid polypeptide reads, in one-letter code: Putative galactitol utilization operon repressor (112 aa).

In terms of domain architecture, HTH deoR-type spans 5-60 (SFERRNKIIQLVNEQGTVLVQDLAGVFAASEATIRADLRFLEQKGVVTRFHGGAAK). The H-T-H motif DNA-binding region spans 22–41 (VLVQDLAGVFAASEATIRAD).

Repressor of the gat operon for galacticol transport and metabolism. In K12 strains the operon is constitutively expressed because this gene is inactive. The polypeptide is Putative galactitol utilization operon repressor (gatR) (Escherichia coli (strain K12)).